We begin with the raw amino-acid sequence, 65 residues long: Large ribosomal subunit protein bL32 (65 aa).

The span at 1–19 (MAIVPKRKTSKQRKHKRQS) shows a compositional bias: basic residues. Residues 1–21 (MAIVPKRKTSKQRKHKRQSHS) are disordered.

Belongs to the bacterial ribosomal protein bL32 family.

This chain is Large ribosomal subunit protein bL32, found in Mesomycoplasma hyopneumoniae (strain 7448) (Mycoplasma hyopneumoniae).